A 257-amino-acid polypeptide reads, in one-letter code: Achaete-scute complex protein T3 (257 aa).

The bHLH domain occupies 83 to 145; it reads PSVARRNARE…RIAVEYIRGL (63 aa). A disordered region spans residues 161-221; it reads YNSADESSND…SEISGGGYIK (61 aa). 2 stretches are compositionally biased toward low complexity: residues 165-184 and 193-213; these read DESS…LDSS and QSAQ…SGSE.

As to quaternary structure, efficient DNA binding requires dimerization with another bHLH protein. In terms of tissue distribution, l(1)SC, SC and AC strongly label the presumptive stomatogastric nervous system, while ASE is more prominent in the presumptive procephalic lobe.

Its function is as follows. AS-C proteins are involved in the determination of the neuronal precursors in the peripheral nervous system and the central nervous system. The polypeptide is Achaete-scute complex protein T3 (l(1)sc) (Drosophila melanogaster (Fruit fly)).